The primary structure comprises 227 residues: Translation initiation factor 6 (227 aa).

Belongs to the eIF-6 family.

Binds to the 50S ribosomal subunit and prevents its association with the 30S ribosomal subunit to form the 70S initiation complex. This is Translation initiation factor 6 from Methanococcus maripaludis (strain C6 / ATCC BAA-1332).